Here is a 210-residue protein sequence, read N- to C-terminus: Large ribosomal subunit protein uL3 (210 aa).

Residues 125-151 (RHGQSRGPMSHGSRYHRRPGSMGPVAP) form a disordered region.

Belongs to the universal ribosomal protein uL3 family. In terms of assembly, part of the 50S ribosomal subunit. Forms a cluster with proteins L14 and L19.

In terms of biological role, one of the primary rRNA binding proteins, it binds directly near the 3'-end of the 23S rRNA, where it nucleates assembly of the 50S subunit. The chain is Large ribosomal subunit protein uL3 from Bacillus cereus (strain ATCC 14579 / DSM 31 / CCUG 7414 / JCM 2152 / NBRC 15305 / NCIMB 9373 / NCTC 2599 / NRRL B-3711).